The following is a 239-amino-acid chain: Ribosomal RNA small subunit methyltransferase G (239 aa).

S-adenosyl-L-methionine is bound by residues G77, F82, 128–129, and R147; that span reads AE.

The protein belongs to the methyltransferase superfamily. RNA methyltransferase RsmG family.

Its subcellular location is the cytoplasm. In terms of biological role, specifically methylates the N7 position of guanine in position 535 of 16S rRNA. The chain is Ribosomal RNA small subunit methyltransferase G from Bacillus cereus (strain AH187).